Consider the following 125-residue polypeptide: UPF0231 protein APL_0968 (125 aa).

It belongs to the UPF0231 family.

The sequence is that of UPF0231 protein APL_0968 from Actinobacillus pleuropneumoniae serotype 5b (strain L20).